The following is a 228-amino-acid chain: 7-cyano-7-deazaguanine synthase (228 aa).

16–26 (FSGGQDSTTCL) provides a ligand contact to ATP. The Zn(2+) site is built by Cys195, Cys203, Cys206, and Cys209.

This sequence belongs to the QueC family. The cofactor is Zn(2+).

It carries out the reaction 7-carboxy-7-deazaguanine + NH4(+) + ATP = 7-cyano-7-deazaguanine + ADP + phosphate + H2O + H(+). It participates in purine metabolism; 7-cyano-7-deazaguanine biosynthesis. In terms of biological role, catalyzes the ATP-dependent conversion of 7-carboxy-7-deazaguanine (CDG) to 7-cyano-7-deazaguanine (preQ(0)). This is 7-cyano-7-deazaguanine synthase from Haemophilus influenzae (strain ATCC 51907 / DSM 11121 / KW20 / Rd).